The primary structure comprises 69 residues: Pleurain-A2 (69 aa).

The first 22 residues, 1–22 (MFTLKKTLLLLYFLGTISISLC), serve as a signal peptide directing secretion. A propeptide spanning residues 23–43 (KQERDADEDDGRKMTEEEVKR) is cleaved from the precursor. An intrachain disulfide couples C63 to C69.

As to expression, expressed by the skin glands.

Its subcellular location is the secreted. In terms of biological role, antimicrobial peptide. Has activity against the Gram-positive bacterium S.aureus ATCC2592 (MIC=15 ug/ml), the Gram-negative bacteria E.coli ATCC25922 (MIC=60 ug/ml), B.dysenteriae (MIC=60 ug/ml), H.pylori NTCT11637 (MIC=30 ug/ml), and the fungus C.albicans ATCC2002 (MIC=30 ug/ml). Has little hemolytic activity on rabbit red blood cells. This Nidirana pleuraden (Yunnan pond frog) protein is Pleurain-A2.